We begin with the raw amino-acid sequence, 254 residues long: UPF0246 protein FTM_0239 (254 aa).

This sequence belongs to the UPF0246 family.

This chain is UPF0246 protein FTM_0239, found in Francisella tularensis subsp. mediasiatica (strain FSC147).